Here is a 276-residue protein sequence, read N- to C-terminus: F420-dependent methylenetetrahydromethanopterin dehydrogenase (276 aa).

This sequence belongs to the MTD family.

The catalysed reaction is 5,10-methylenetetrahydromethanopterin + oxidized coenzyme F420-(gamma-L-Glu)(n) + 2 H(+) = 5,10-methenyl-5,6,7,8-tetrahydromethanopterin + reduced coenzyme F420-(gamma-L-Glu)(n). It participates in one-carbon metabolism; methanogenesis from CO(2); 5,10-methylene-5,6,7,8-tetrahydromethanopterin from 5,10-methenyl-5,6,7,8-tetrahydromethanopterin (coenzyme F420 route): step 1/1. In terms of biological role, catalyzes the reversible reduction of methenyl-H(4)MPT(+) to methylene-H(4)MPT. The protein is F420-dependent methylenetetrahydromethanopterin dehydrogenase of Methanococcus vannielii (strain ATCC 35089 / DSM 1224 / JCM 13029 / OCM 148 / SB).